Consider the following 773-residue polypeptide: Ethylene receptor 2 (773 aa).

The next 4 membrane-spanning stretches (helical) occupy residues 4–24 (EIAS…VLAI), 53–73 (VSDF…LYFV), 82–102 (WVLF…LLHG), and 122–142 (LTAL…PLLL). Cu cation contacts are provided by cysteine 94 and histidine 98. One can recognise a GAF domain in the interval 187 to 331 (DRHTILYTTL…VVADQVTVAL (145 aa)). The Histidine kinase domain maps to 374 to 614 (TMSEGMRRPM…PETMSLLLRF (241 aa)). The Response regulatory domain maps to 647-766 (QVLLVDTNDS…AMESELRRVL (120 aa)). Aspartate 702 carries the 4-aspartylphosphate modification. Lysine 751 is covalently cross-linked (Glycyl lysine isopeptide (Lys-Gly) (interchain with G-Cter in ubiquitin)).

Belongs to the ethylene receptor family. In terms of assembly, heteromer with ETR1. Binds to MRF3/ECIP1. It depends on Cu cation as a cofactor. In terms of processing, autophosphorylated predominantly on Ser residues. As to expression, expressed in seedlings, roots, leaves, flowers, mature siliques, shoot apical meristems, leaf primordia, inflorescence meristems, young floral meristems, developing petals, carpels and ovules. Low expression in stamens.

The protein resides in the endoplasmic reticulum membrane. Its function is as follows. Ethylene receptor related to bacterial two-component regulators. Acts as a redundant negative regulator of ethylene signaling. The chain is Ethylene receptor 2 from Arabidopsis thaliana (Mouse-ear cress).